We begin with the raw amino-acid sequence, 182 residues long: Protein canopy homolog 2 (182 aa).

The signal sequence occupies residues 1–20 (MKGWGWLALLLGALLGTAWA). The 152-residue stretch at 24–175 (QDLHCGACRA…KRTDLCDHAL (152 aa)) folds into the Saposin B-type domain. 3 disulfides stabilise this stretch: C28/C171, C31/C164, and C86/C137. S115 is modified (phosphoserine). The short motif at 179 to 182 (HDEL) is the Prevents secretion from ER element.

It belongs to the canopy family. In terms of assembly, interacts with MYLIP/MIR. In terms of tissue distribution, expressed in different tissues. Highest levels are detected in adult placenta, liver and pancreas.

Its subcellular location is the endoplasmic reticulum. Its function is as follows. Positive regulator of neurite outgrowth by stabilizing myosin regulatory light chain (MRLC). It prevents MIR-mediated MRLC ubiquitination and its subsequent proteasomal degradation. This chain is Protein canopy homolog 2 (CNPY2), found in Homo sapiens (Human).